The following is a 241-amino-acid chain: Methylthioribulose-1-phosphate dehydratase (241 aa).

The segment covering Met-1–Asp-12 has biased composition (basic and acidic residues). The disordered stretch occupies residues Met-1–His-22. A substrate-binding site is contributed by Cys-101. His-118 and His-120 together coordinate Zn(2+). Glu-147 serves as the catalytic Proton donor/acceptor. Residue His-203 coordinates Zn(2+).

Belongs to the aldolase class II family. MtnB subfamily. It depends on Zn(2+) as a cofactor.

The protein localises to the cytoplasm. The catalysed reaction is 5-(methylsulfanyl)-D-ribulose 1-phosphate = 5-methylsulfanyl-2,3-dioxopentyl phosphate + H2O. It participates in amino-acid biosynthesis; L-methionine biosynthesis via salvage pathway; L-methionine from S-methyl-5-thio-alpha-D-ribose 1-phosphate: step 2/6. Functionally, catalyzes the dehydration of methylthioribulose-1-phosphate (MTRu-1-P) into 2,3-diketo-5-methylthiopentyl-1-phosphate (DK-MTP-1-P). This Aspergillus terreus (strain NIH 2624 / FGSC A1156) protein is Methylthioribulose-1-phosphate dehydratase.